The chain runs to 317 residues: Carbonic anhydrase 5B, mitochondrial (317 aa).

The N-terminal 33 residues, 1–33, are a transit peptide targeting the mitochondrion; that stretch reads MTVMSHLRVSLQVSSCTLLWRRFRVPRLVPLRS. In terms of domain architecture, Alpha-carbonic anhydrase spans 37–296; sequence YTCTYRTRNR…LMNRTVRSSF (260 aa). The Zn(2+) site is built by His130, His132, and His155. Position 235 to 236 (235 to 236) interacts with substrate; the sequence is TT.

This sequence belongs to the alpha-carbonic anhydrase family. Zn(2+) is required as a cofactor.

The protein localises to the mitochondrion. The catalysed reaction is hydrogencarbonate + H(+) = CO2 + H2O. Its function is as follows. Mitochondrial carbonic anhydrase that catalyzes the reversible conversion of carbon dioxide to bicarbonate/HCO3. In Rattus norvegicus (Rat), this protein is Carbonic anhydrase 5B, mitochondrial (Ca5b).